Consider the following 374-residue polypeptide: Probable quinol oxidase subunit 2 (374 aa).

An N-terminal signal peptide occupies residues 1-19 (MSKFKSLLLLFGTLILLSG). Cysteine 20 carries the N-palmitoyl cysteine lipid modification. Cysteine 20 carries S-diacylglycerol cysteine lipidation. The next 2 helical transmembrane spans lie at 43–63 (SIIF…IFIF) and 82–102 (IETI…IPTV). The disordered stretch occupies residues 317 to 374 (ERHGMKPMILGNNEKYDNEFKKEEDHNSKEMEKISKGAKDENASKLHKKEHDDHGGGH). Residues 330 to 374 (EKYDNEFKKEEDHNSKEMEKISKGAKDENASKLHKKEHDDHGGGH) are compositionally biased toward basic and acidic residues.

This sequence belongs to the cytochrome c oxidase subunit 2 family.

Its subcellular location is the cell membrane. It carries out the reaction 2 a quinol + O2 = 2 a quinone + 2 H2O. Catalyzes quinol oxidation with the concomitant reduction of oxygen to water. Subunit II transfers the electrons from a quinol to the binuclear center of the catalytic subunit I. This is Probable quinol oxidase subunit 2 (qoxA) from Staphylococcus epidermidis (strain ATCC 12228 / FDA PCI 1200).